The sequence spans 1028 residues: MDLNGDAGAKRKRSSITTPAERPVKHLRPESSALTPGDSTPANGTVYDVEDDEDASRLLPVGPAQADSPEWQATIEEVVKSVVSIHFCQTCSFDTELSMSSQATGFVVDAENGYILTNRHVVCPGPFWGYCIFDNHEECDVRPVYRDPVHDFGILKFDPKAIRYMKLRELKLQPDAAKVGSEIRVVGNDAGEKLSILSGVISRLDRNAPEYGDGYSDFNTNYIQAAAAASGGSSGSPVVNIDGHAIALQAGGRADGAATDYFLPLDRPLRALECIRRGEPVTRGTIQTQWILKPFDECRRLGLTPEWEATVRKAAPTETSMLVAEIILPEGPADGKLEEGDVLLQVNGVLLTQFIRLDDILDSSVGQTVRLLVQRGGQNVEIECQVGDLHAITPDRFVTVAGGTFHNLSYQQSRLYAIATRGVYVCEAAGSFKLENTLSGWIIDSVDKRPTRNLDEFVEVMRTIPDRSRVVISYRHIRDLHTRGTSIVYIDRHWHPKMRLAVRNDDTGLWDFSDLADPIPALPPVPRKADFIQLDGVSQPAAADIVRSFVRVSCTMPLKLDGYPQAKKTGFGLVVDAEKGLVVVSRAIVPYDLCDINVTVADSIIVNAKVVFLHPLQNYSIIQYDPSLVQAPVQSAKLATDYIKQGQDTIFVGFNQNFRIVVAKTAVTDITTVSIPANASAPRYRAINLDAITVDTGLSGQCSNGVLIGEDGVVQALWLNYLGERTSNSHKDVEYHLGFATPSLLPVLSKVQQGEMPELRILNMESYVVQMSQARIMGVSEEWIEKVTQANPSRHQLFMVRKVDCPPPGFNSAADTFEEGDIILTLDGQLITRVSELDIMYEKDTLEALIVRNGQEMRIQVPTVPTEDLETDRAVVFCGAVLQKPHHAVRQQISKLHSEVYVSARSRGSPSYQYGLAPTNFITAVNGVPTPNLDRFSEEVSKIPDNTYFRLRAVTFDNVPWVVTVKKNDHYFPMSEYIKDQSQPSGWRTVSHDKDKYKDGIAPDAANLNPDAMDEGFDGVSDIEPDLE.

The interval 1 to 49 (MDLNGDAGAKRKRSSITTPAERPVKHLRPESSALTPGDSTPANGTVYDV) is disordered. The span at 32-43 (SALTPGDSTPAN) shows a compositional bias: polar residues. The segment at 82-266 (VVSIHFCQTC…AATDYFLPLD (185 aa)) is serine protease. Residues H120, D151, and S233 each act as charge relay system in the active site. 2 PDZ domains span residues 289–374 (QWIL…LLVQ) and 876–957 (VFCG…VTFD). The interval 983-1028 (QPSGWRTVSHDKDKYKDGIAPDAANLNPDAMDEGFDGVSDIEPDLE) is disordered. The span at 990-1001 (VSHDKDKYKDGI) shows a compositional bias: basic and acidic residues. A compositionally biased stretch (acidic residues) spans 1012-1028 (AMDEGFDGVSDIEPDLE).

This sequence belongs to the peptidase S1C family.

The protein resides in the nucleus. Its function is as follows. Nuclear serine protease which mediates apoptosis. This is Pro-apoptotic serine protease nma111 (nma111) from Aspergillus niger (strain ATCC MYA-4892 / CBS 513.88 / FGSC A1513).